The primary structure comprises 191 residues: Adenylate kinase (191 aa).

Residue 11 to 16 coordinates ATP; it reads GSGKGT. The tract at residues 31–60 is NMP; that stretch reads STGEILRREIKDKTELGKIAEEYINQGQLL. AMP contacts are provided by residues Thr-32, Arg-37, 58-60, 86-89, and Gln-93; these read QLL and GFPR. Positions 127 to 137 are LID; the sequence is KRGKLFSRKDD. Arg-128 is an ATP binding site. AMP contacts are provided by Arg-134 and Arg-145. Asn-173 provides a ligand contact to ATP.

The protein belongs to the adenylate kinase family. In terms of assembly, monomer.

Its subcellular location is the cytoplasm. It carries out the reaction AMP + ATP = 2 ADP. The protein operates within purine metabolism; AMP biosynthesis via salvage pathway; AMP from ADP: step 1/1. Its function is as follows. Catalyzes the reversible transfer of the terminal phosphate group between ATP and AMP. Plays an important role in cellular energy homeostasis and in adenine nucleotide metabolism. In Azobacteroides pseudotrichonymphae genomovar. CFP2, this protein is Adenylate kinase.